A 108-amino-acid chain; its full sequence is uncharacterized protein (108 aa).

3 helical membrane-spanning segments follow: residues 10 to 32, 45 to 67, and 77 to 99; these read SLCY…FVVN, ISHI…GAVA, and FVII…WNVI.

The protein localises to the cell membrane. This is an uncharacterized protein from Bacillus subtilis (strain 168).